The primary structure comprises 262 residues: NAD-dependent protein deacylase (262 aa).

The Deacetylase sirtuin-type domain occupies 1–262; that stretch reads MSNLRRAAEA…AALSPPGVPT (262 aa). An NAD(+)-binding site is contributed by 22–42; that stretch reads GAGISADSGIPTFRDKLTGLW. Residues Tyr-67 and Arg-70 each coordinate substrate. 101–104 contributes to the NAD(+) binding site; the sequence is QNID. The active-site Proton acceptor is the His-119. 4 residues coordinate Zn(2+): Cys-127, Cys-130, Cys-155, and Cys-158. NAD(+)-binding positions include 195–197, 221–223, and Ala-239; these read GTS and NLE.

The protein belongs to the sirtuin family. Class III subfamily. Zn(2+) serves as cofactor.

The protein resides in the cytoplasm. The enzyme catalyses N(6)-acetyl-L-lysyl-[protein] + NAD(+) + H2O = 2''-O-acetyl-ADP-D-ribose + nicotinamide + L-lysyl-[protein]. It carries out the reaction N(6)-succinyl-L-lysyl-[protein] + NAD(+) + H2O = 2''-O-succinyl-ADP-D-ribose + nicotinamide + L-lysyl-[protein]. Functionally, NAD-dependent lysine deacetylase and desuccinylase that specifically removes acetyl and succinyl groups on target proteins. Modulates the activities of several proteins which are inactive in their acylated form. This Pseudomonas putida (strain ATCC 47054 / DSM 6125 / CFBP 8728 / NCIMB 11950 / KT2440) protein is NAD-dependent protein deacylase.